Here is a 151-residue protein sequence, read N- to C-terminus: Probable cGMP 3',5'-cyclic phosphodiesterase subunit delta (151 aa).

It belongs to the PDE6D/unc-119 family. In terms of assembly, interacts with Pde6.

The protein resides in the nucleus. Its subcellular location is the cytoplasm. The protein is Probable cGMP 3',5'-cyclic phosphodiesterase subunit delta of Culex quinquefasciatus (Southern house mosquito).